A 195-amino-acid polypeptide reads, in one-letter code: Cysteine/O-acetylserine efflux protein (195 aa).

The Periplasmic segment spans residues 1-7 (MTPTLLS). The chain crosses the membrane as a helical span at residues 8–28 (AFWTYTLITAMTPGPNNILAL). Over 29-46 (SSATTHGFHQSTRVLAGM) the chain is Cytoplasmic. A helical membrane pass occupies residues 47–67 (SLGFLIVMLLCAGISFSLAVI). Residues 68–69 (DP) lie on the Periplasmic side of the membrane. Residues 70-90 (AAVHLLSWAGAAYIVWLAWKI) form a helical membrane-spanning segment. Residues 91–104 (ATSPTKEDGLQTKP) are Cytoplasmic-facing. A helical transmembrane segment spans residues 105 to 125 (ISFWASFALQFVNVKIILYGV). Topologically, residues 126–141 (TALSTFVLPQTQALSW) are periplasmic. A helical membrane pass occupies residues 142–162 (IVGVSVLLAMIGTFGNVCWAL). The Cytoplasmic portion of the chain corresponds to 163-176 (AGHLFQRLFRQYGR). A helical membrane pass occupies residues 177-194 (QLNIVLALLLIYCAVRIF). Tyr-195 is a topological domain (periplasmic).

The protein belongs to the Rht family.

It is found in the cell inner membrane. The catalysed reaction is O-acetyl-L-serine(in) = O-acetyl-L-serine(out). It catalyses the reaction L-cysteine(in) = L-cysteine(out). In terms of biological role, exporter of O-acetylserine (OAS) and cysteine. The protein is Cysteine/O-acetylserine efflux protein (eamB) of Escherichia coli O157:H7.